The chain runs to 519 residues: Galactose-1-phosphate uridylyltransferase (519 aa).

The protein belongs to the galactose-1-phosphate uridylyltransferase type 2 family.

It is found in the cytoplasm. It catalyses the reaction alpha-D-galactose 1-phosphate + UDP-alpha-D-glucose = alpha-D-glucose 1-phosphate + UDP-alpha-D-galactose. Its pathway is carbohydrate metabolism; galactose metabolism. The chain is Galactose-1-phosphate uridylyltransferase from Caldanaerobacter subterraneus subsp. tengcongensis (strain DSM 15242 / JCM 11007 / NBRC 100824 / MB4) (Thermoanaerobacter tengcongensis).